Consider the following 1142-residue polypeptide: Fibronectin type-III domain-containing protein 3A (1142 aa).

Residues tyrosine 104–glutamine 191 are disordered. Positions valine 107 to methionine 145 are enriched in basic and acidic residues. Residues serine 146 to proline 158 show a composition bias toward low complexity. Phosphoserine is present on residues serine 147, serine 151, and serine 157. 9 consecutive Fibronectin type-III domains span residues asparagine 212–cysteine 313, isoleucine 317–cysteine 409, methionine 413–aspartate 506, isoleucine 510–valine 604, proline 608–glycine 701, glutamine 705–serine 795, glutamate 805–leucine 894, proline 895–serine 989, and valine 990–proline 1095. Residue lysine 328 is modified to N6-acetyllysine. Residues asparagine 1121 to isoleucine 1141 traverse the membrane as a helical segment.

This sequence belongs to the FNDC3 family.

Its subcellular location is the golgi apparatus membrane. In terms of biological role, mediates spermatid-Sertoli adhesion during spermatogenesis. This chain is Fibronectin type-III domain-containing protein 3A (FNDC3A), found in Pongo abelii (Sumatran orangutan).